A 321-amino-acid polypeptide reads, in one-letter code: UDP-N-acetylenolpyruvoylglucosamine reductase (321 aa).

An FAD-binding PCMH-type domain is found at 36-203 (FRAGGLAEVM…TGALFEGYPE (168 aa)). Residue R183 is part of the active site. Catalysis depends on S232, which acts as the Proton donor. The active site involves E302.

Belongs to the MurB family. Requires FAD as cofactor.

It is found in the cytoplasm. The catalysed reaction is UDP-N-acetyl-alpha-D-muramate + NADP(+) = UDP-N-acetyl-3-O-(1-carboxyvinyl)-alpha-D-glucosamine + NADPH + H(+). It participates in cell wall biogenesis; peptidoglycan biosynthesis. In terms of biological role, cell wall formation. The sequence is that of UDP-N-acetylenolpyruvoylglucosamine reductase from Agrobacterium fabrum (strain C58 / ATCC 33970) (Agrobacterium tumefaciens (strain C58)).